Here is a 476-residue protein sequence, read N- to C-terminus: Probable protein S-acyltransferase 5 (476 aa).

Positions 1-11 (MLDLQPSDRRH) are enriched in basic and acidic residues. Positions 1–21 (MLDLQPSDRRHGAPSSSGGVS) are disordered. The next 2 helical transmembrane spans lie at 53–73 (SILITVFLITAPVIVFCIFVG) and 85–105 (GVSVLAVAVGLILLDLVFLLL). A disordered region spans residues 119–138 (YPPEPESNEGNGEPRLAHTP). The region spanning 158 to 208 (KYCDTCMLYRPPRASHCSICNNCVEKFDHHCPWLGQCIGLRNYRFYFMFVL) is the DHHC domain. The active-site S-palmitoyl cysteine intermediate is cysteine 188. Transmembrane regions (helical) follow at residues 209–223 (CSTLLCIYVHVFCWI) and 246–266 (SIALIIYTFICVWFVGGLTCF). Disordered stretches follow at residues 320–340 (SKEPAIPPRTVNGGMSSPSLQ) and 373–454 (VASR…ASRD). Serine 336 is modified (phosphoserine). Residues 387-412 (SEGRGIMHSRESSRGRGIMHSRESSR) are compositionally biased toward basic and acidic residues. A Phosphoserine modification is found at serine 418. A compositionally biased stretch (basic and acidic residues) spans 425-441 (VNEDLRTRDESVSRVGE).

This sequence belongs to the DHHC palmitoyltransferase family.

It localises to the cell membrane. It catalyses the reaction L-cysteinyl-[protein] + hexadecanoyl-CoA = S-hexadecanoyl-L-cysteinyl-[protein] + CoA. Its function is as follows. Palmitoyl acyltransferase. The sequence is that of Probable protein S-acyltransferase 5 (PAT05) from Arabidopsis thaliana (Mouse-ear cress).